The chain runs to 129 residues: Small ribosomal subunit protein uS11 (129 aa).

It belongs to the universal ribosomal protein uS11 family. As to quaternary structure, part of the 30S ribosomal subunit. Interacts with proteins S7 and S18. Binds to IF-3.

In terms of biological role, located on the platform of the 30S subunit, it bridges several disparate RNA helices of the 16S rRNA. Forms part of the Shine-Dalgarno cleft in the 70S ribosome. The protein is Small ribosomal subunit protein uS11 of Carboxydothermus hydrogenoformans (strain ATCC BAA-161 / DSM 6008 / Z-2901).